The primary structure comprises 363 residues: Putative RAD2-like endonuclease 095R (363 aa).

It belongs to the XPG/RAD2 endonuclease family. Mg(2+) serves as cofactor.

The protein localises to the host nucleus. Its function is as follows. Probable endonuclease. This chain is Putative RAD2-like endonuclease 095R, found in Frog virus 3 (isolate Goorha) (FV-3).